Here is a 364-residue protein sequence, read N- to C-terminus: DNA polymerase IV (364 aa).

The UmuC domain occupies 14-198 (IIHIDMDAFF…LPVEKFHGVG (185 aa)). Residues D18 and D116 each coordinate Mg(2+). Residue E117 is part of the active site.

This sequence belongs to the DNA polymerase type-Y family. In terms of assembly, monomer. The cofactor is Mg(2+).

It localises to the cytoplasm. The enzyme catalyses DNA(n) + a 2'-deoxyribonucleoside 5'-triphosphate = DNA(n+1) + diphosphate. Functionally, poorly processive, error-prone DNA polymerase involved in untargeted mutagenesis. Copies undamaged DNA at stalled replication forks, which arise in vivo from mismatched or misaligned primer ends. These misaligned primers can be extended by PolIV. Exhibits no 3'-5' exonuclease (proofreading) activity. May be involved in translesional synthesis, in conjunction with the beta clamp from PolIII. The sequence is that of DNA polymerase IV from Lactococcus lactis subsp. cremoris (strain MG1363).